A 133-amino-acid chain; its full sequence is ATP synthase epsilon chain, chloroplastic (133 aa).

This sequence belongs to the ATPase epsilon chain family. As to quaternary structure, F-type ATPases have 2 components, CF(1) - the catalytic core - and CF(0) - the membrane proton channel. CF(1) has five subunits: alpha(3), beta(3), gamma(1), delta(1), epsilon(1). CF(0) has three main subunits: a, b and c.

Its subcellular location is the plastid. The protein localises to the chloroplast thylakoid membrane. Functionally, produces ATP from ADP in the presence of a proton gradient across the membrane. The polypeptide is ATP synthase epsilon chain, chloroplastic (Gossypium barbadense (Sea Island cotton)).